The following is a 323-amino-acid chain: Ethanolamine-phosphate cytidylyltransferase (323 aa).

It belongs to the cytidylyltransferase family.

The protein resides in the cytoplasm. The protein localises to the nucleus. The enzyme catalyses phosphoethanolamine + CTP + H(+) = CDP-ethanolamine + diphosphate. It participates in phospholipid metabolism; phosphatidylethanolamine biosynthesis; phosphatidylethanolamine from ethanolamine: step 2/3. Ethanolamine-phosphate cytidylyltransferase which catalyzes the second step of phosphatidylethanolamine biosynthesis. Involved in the maintenance of plasma membrane and required for proper sporulation. The protein is Ethanolamine-phosphate cytidylyltransferase of Saccharomyces cerevisiae (strain ATCC 204508 / S288c) (Baker's yeast).